We begin with the raw amino-acid sequence, 478 residues long: Methionine aminopeptidase 2-1 (478 aa).

Residues 1 to 124 form a disordered region; sequence MGSKSPEGHN…PRVPLSTLFP (124 aa). Acidic residues predominate over residues 46–56; sequence NDDDDADDDEK. A compositionally biased stretch (basic residues) spans 92–104; that stretch reads KKKKKRKRSKKKA. Residue His-230 coordinates substrate. Residues Asp-251, Asp-262, and His-331 each contribute to the a divalent metal cation site. His-339 contacts substrate. 2 residues coordinate a divalent metal cation: Glu-364 and Glu-459.

The protein belongs to the peptidase M24A family. Methionine aminopeptidase eukaryotic type 2 subfamily. The cofactor is Co(2+). Requires Zn(2+) as cofactor. Mn(2+) is required as a cofactor. Fe(2+) serves as cofactor.

Its subcellular location is the cytoplasm. It carries out the reaction Release of N-terminal amino acids, preferentially methionine, from peptides and arylamides.. In terms of biological role, cotranslationally removes the N-terminal methionine from nascent proteins. The N-terminal methionine is often cleaved when the second residue in the primary sequence is small and uncharged (Met-Ala-, Cys, Gly, Pro, Ser, Thr, or Val). This is Methionine aminopeptidase 2-1 from Aspergillus clavatus (strain ATCC 1007 / CBS 513.65 / DSM 816 / NCTC 3887 / NRRL 1 / QM 1276 / 107).